The following is a 134-amino-acid chain: Isocitrate dehydrogenase [NAD] subunit alpha, mitochondrial (134 aa).

Position 37 is an N6-succinyllysine (lysine 37). Residue threonine 50 is modified to Phosphothreonine. Positions 64, 74, and 95 each coordinate substrate.

The protein belongs to the isocitrate and isopropylmalate dehydrogenases family. In terms of assembly, heterooligomer of subunits alpha (IDH3A), beta (IDH3B), and gamma (IDH3G) in the apparent ratio of 2:1:1. The heterodimer containing one IDH3A and one IDH3B subunit and the heterodimer containing one IDH3A and one IDH3G subunit assemble into a heterotetramer (which contains two subunits of IDH3A, one of IDH3B and one of IDH3G) and further into the heterooctamer. It depends on Mg(2+) as a cofactor. Mn(2+) serves as cofactor.

The protein resides in the mitochondrion. It carries out the reaction D-threo-isocitrate + NAD(+) = 2-oxoglutarate + CO2 + NADH. With respect to regulation, the heterotetramer and the heterodimer composed of IDH3A and IDH3G subunits can be allosterically activated by citrate (CIT) or/and ADP, and the two activators can act independently or synergistically. The heterodimer composed of IDH3A and IDH3B subunits cannot be allosterically regulated and the allosteric regulation of the heterotetramer is through the IDH3G subunit and not the IDH3B subunit. The IDH3G subunit contains the allosteric site which consists of a CIT-binding site and an ADP-binding site, and the binding of CIT and ADP causes conformational changes at the allosteric site which are transmitted to the active site in the catalytic subunit (IDH3A) through a cascade of conformational changes at the heterodimer interface, leading to stabilization of the isocitrate-binding at the active site and thus activation of the enzyme. ATP can activate the heterotetramer and the heterodimer composed of IDH3A and IDH3G subunits at low concentrations but inhibits their activities at high concentrations, whereas ATP exhibits only inhibitory effect on the heterodimer composed of IDH3A and IDH3B subunits. Its function is as follows. Catalytic subunit of the enzyme which catalyzes the decarboxylation of isocitrate (ICT) into alpha-ketoglutarate. The heterodimer composed of the alpha (IDH3A) and beta (IDH3B) subunits and the heterodimer composed of the alpha (IDH3A) and gamma (IDH3G) subunits, have considerable basal activity but the full activity of the heterotetramer (containing two subunits of IDH3A, one of IDH3B and one of IDH3G) requires the assembly and cooperative function of both heterodimers. The sequence is that of Isocitrate dehydrogenase [NAD] subunit alpha, mitochondrial from Mesocricetus auratus (Golden hamster).